We begin with the raw amino-acid sequence, 188 residues long: Elongation factor P (188 aa).

The protein belongs to the elongation factor P family.

It localises to the cytoplasm. The protein operates within protein biosynthesis; polypeptide chain elongation. In terms of biological role, involved in peptide bond synthesis. Stimulates efficient translation and peptide-bond synthesis on native or reconstituted 70S ribosomes in vitro. Probably functions indirectly by altering the affinity of the ribosome for aminoacyl-tRNA, thus increasing their reactivity as acceptors for peptidyl transferase. This chain is Elongation factor P, found in Natranaerobius thermophilus (strain ATCC BAA-1301 / DSM 18059 / JW/NM-WN-LF).